Reading from the N-terminus, the 266-residue chain is 3-methyl-2-oxobutanoate hydroxymethyltransferase (266 aa).

Residues aspartate 47 and aspartate 86 each contribute to the Mg(2+) site. 3-methyl-2-oxobutanoate-binding positions include 47–48 (DS), aspartate 86, and lysine 114. Residue glutamate 116 coordinates Mg(2+). The active-site Proton acceptor is the glutamate 183.

It belongs to the PanB family. As to quaternary structure, homodecamer; pentamer of dimers. Mg(2+) is required as a cofactor.

It is found in the cytoplasm. It carries out the reaction 3-methyl-2-oxobutanoate + (6R)-5,10-methylene-5,6,7,8-tetrahydrofolate + H2O = 2-dehydropantoate + (6S)-5,6,7,8-tetrahydrofolate. It functions in the pathway cofactor biosynthesis; (R)-pantothenate biosynthesis; (R)-pantoate from 3-methyl-2-oxobutanoate: step 1/2. In terms of biological role, catalyzes the reversible reaction in which hydroxymethyl group from 5,10-methylenetetrahydrofolate is transferred onto alpha-ketoisovalerate to form ketopantoate. The chain is 3-methyl-2-oxobutanoate hydroxymethyltransferase from Idiomarina loihiensis (strain ATCC BAA-735 / DSM 15497 / L2-TR).